Reading from the N-terminus, the 515-residue chain is Bifunctional purine biosynthesis protein PurH (515 aa).

In terms of domain architecture, MGS-like spans 1-145 (MTKRALISVS…KNHASVTVVV (145 aa)).

It belongs to the PurH family.

The catalysed reaction is (6R)-10-formyltetrahydrofolate + 5-amino-1-(5-phospho-beta-D-ribosyl)imidazole-4-carboxamide = 5-formamido-1-(5-phospho-D-ribosyl)imidazole-4-carboxamide + (6S)-5,6,7,8-tetrahydrofolate. The enzyme catalyses IMP + H2O = 5-formamido-1-(5-phospho-D-ribosyl)imidazole-4-carboxamide. The protein operates within purine metabolism; IMP biosynthesis via de novo pathway; 5-formamido-1-(5-phospho-D-ribosyl)imidazole-4-carboxamide from 5-amino-1-(5-phospho-D-ribosyl)imidazole-4-carboxamide (10-formyl THF route): step 1/1. It participates in purine metabolism; IMP biosynthesis via de novo pathway; IMP from 5-formamido-1-(5-phospho-D-ribosyl)imidazole-4-carboxamide: step 1/1. The protein is Bifunctional purine biosynthesis protein PurH of Streptococcus equi subsp. equi (strain 4047).